The sequence spans 697 residues: Elongation factor G (697 aa).

In terms of domain architecture, tr-type G spans 8–282; that stretch reads EDYRNIGIMA…AVVDYLPSPL (275 aa). GTP contacts are provided by residues 17 to 24, 81 to 85, and 135 to 138; these read AHIDAGKT, DTPGH, and NKMD.

Belongs to the TRAFAC class translation factor GTPase superfamily. Classic translation factor GTPase family. EF-G/EF-2 subfamily.

The protein localises to the cytoplasm. Catalyzes the GTP-dependent ribosomal translocation step during translation elongation. During this step, the ribosome changes from the pre-translocational (PRE) to the post-translocational (POST) state as the newly formed A-site-bound peptidyl-tRNA and P-site-bound deacylated tRNA move to the P and E sites, respectively. Catalyzes the coordinated movement of the two tRNA molecules, the mRNA and conformational changes in the ribosome. This is Elongation factor G from Mycoplasmopsis agalactiae (strain NCTC 10123 / CIP 59.7 / PG2) (Mycoplasma agalactiae).